Here is a 92-residue protein sequence, read N- to C-terminus: Putative pterin-4-alpha-carbinolamine dehydratase (92 aa).

It belongs to the pterin-4-alpha-carbinolamine dehydratase family.

The enzyme catalyses (4aS,6R)-4a-hydroxy-L-erythro-5,6,7,8-tetrahydrobiopterin = (6R)-L-erythro-6,7-dihydrobiopterin + H2O. In Natronomonas pharaonis (strain ATCC 35678 / DSM 2160 / CIP 103997 / JCM 8858 / NBRC 14720 / NCIMB 2260 / Gabara) (Halobacterium pharaonis), this protein is Putative pterin-4-alpha-carbinolamine dehydratase.